Here is a 386-residue protein sequence, read N- to C-terminus: 8-amino-7-oxononanoate synthase (386 aa).

Arg20 serves as a coordination point for substrate. 107 to 108 (GY) contacts pyridoxal 5'-phosphate. Residue His132 participates in substrate binding. Pyridoxal 5'-phosphate contacts are provided by Ser178, His206, and Thr234. The residue at position 237 (Lys237) is an N6-(pyridoxal phosphate)lysine. Thr351 is a substrate binding site.

Belongs to the class-II pyridoxal-phosphate-dependent aminotransferase family. BioF subfamily. As to quaternary structure, homodimer. It depends on pyridoxal 5'-phosphate as a cofactor.

The catalysed reaction is 6-carboxyhexanoyl-[ACP] + L-alanine + H(+) = (8S)-8-amino-7-oxononanoate + holo-[ACP] + CO2. Its pathway is cofactor biosynthesis; biotin biosynthesis. In terms of biological role, catalyzes the decarboxylative condensation of pimeloyl-[acyl-carrier protein] and L-alanine to produce 8-amino-7-oxononanoate (AON), [acyl-carrier protein], and carbon dioxide. The polypeptide is 8-amino-7-oxononanoate synthase (Aromatoleum aromaticum (strain DSM 19018 / LMG 30748 / EbN1) (Azoarcus sp. (strain EbN1))).